The chain runs to 478 residues: uncharacterized protein (478 aa).

The 119-residue stretch at 2-120 folds into the RCK N-terminal domain; it reads MNMITVIGFG…NIDKIINILE (119 aa).

This is an uncharacterized protein from Methanocaldococcus jannaschii (strain ATCC 43067 / DSM 2661 / JAL-1 / JCM 10045 / NBRC 100440) (Methanococcus jannaschii).